The primary structure comprises 427 residues: Putative tyrosine recombinase XerC (427 aa).

Residues 1 to 81 enclose the Core-binding (CB) domain; that stretch reads MTPQQLTEEY…HLRTIWGYAI (81 aa). Positions 116–305 constitute a Tyr recombinase domain; sequence RARSWLSMQV…DYDHMRAVLH (190 aa). Active-site residues include R156, K183, H256, R259, and H283. Y292 functions as the O-(3'-phospho-DNA)-tyrosine intermediate in the catalytic mechanism. Disordered stretches follow at residues 323–384 and 401–427; these read SGSP…PPDT and RAATASAVPAATSGSGGRGSAARDSLA. The segment covering 350 to 362 has biased composition (basic and acidic residues); sequence ARTEPSEPREHTQ. Positions 402-413 are enriched in low complexity; that stretch reads AATASAVPAATS.

It belongs to the 'phage' integrase family.

It is found in the cytoplasm. Functionally, site-specific tyrosine recombinase, which acts by catalyzing the cutting and rejoining of the recombining DNA molecules. This is Putative tyrosine recombinase XerC from Pseudomonas aeruginosa.